A 101-amino-acid polypeptide reads, in one-letter code: Small ribosomal subunit protein uS14 (101 aa).

It belongs to the universal ribosomal protein uS14 family. As to quaternary structure, part of the 30S ribosomal subunit. Contacts proteins S3 and S10.

Functionally, binds 16S rRNA, required for the assembly of 30S particles and may also be responsible for determining the conformation of the 16S rRNA at the A site. In Vibrio vulnificus (strain CMCP6), this protein is Small ribosomal subunit protein uS14.